The chain runs to 473 residues: MAP kinase-activated protein kinase 5 (473 aa).

Residues isoleucine 22–leucine 304 enclose the Protein kinase domain. Residues leucine 28 to valine 36 and lysine 51 contribute to the ATP site. At serine 115 the chain carries Phosphoserine; by PKA. The active-site Proton acceptor is aspartate 148. At threonine 182 the chain carries Phosphothreonine; by MAPK11, MAPK14, MAPK4, MAPK6 and PKA. Residues serine 212 and serine 354 each carry the phosphoserine modification. A coiled-coil region spans residues glutamate 409–serine 440.

It belongs to the protein kinase superfamily. CAMK Ser/Thr protein kinase family. As to quaternary structure, interacts with SQSTM1. Interacts with ERK3/MAPK6 and ERK4/MAPK4 (via FRIEDE motif); the interaction is direct. Interacts with YWHAE; the interaction prevents phosphorylation of HSP27/HSPB1 leading to disrupt F-actin polymerization. Phosphorylated on Thr-182 ERK3/MAPK6 or ERK4/MAPK4; which is the regulatory phosphorylation site and is located on the T-loop/loop 12, leading to activation. Phosphorylation at Thr-182 by p38-alpha/MAPK14, p38-beta/MAPK11 is subject to debate. Phosphorylated at Ser-115 by PKA/PRKACA, leading to localization to the cytoplasm. Autophosphorylated. In terms of tissue distribution, expressed ubiquitously.

Its subcellular location is the cytoplasm. The protein resides in the nucleus. It carries out the reaction L-seryl-[protein] + ATP = O-phospho-L-seryl-[protein] + ADP + H(+). The enzyme catalyses L-threonyl-[protein] + ATP = O-phospho-L-threonyl-[protein] + ADP + H(+). With respect to regulation, activated following phosphorylation at Thr-182 by p38-alpha/MAPK14, p38-beta/MAPK11, ERK2/MAPK1, ERK3/MAPK6, and ERK4/MAPK4. Activated by stress-related extracellular stimuli; such as H(2)O(2), arsenite, anisomycin TNF alpha and also PMA and the calcium ionophore A23187; but to a lesser extent. In vitro, activated by SQSTM1. Inhibited by diterpenoid alkaloid noroxoaconitine. Its function is as follows. Tumor suppressor serine/threonine-protein kinase involved in mTORC1 signaling and post-transcriptional regulation. Phosphorylates FOXO3, ERK3/MAPK6, ERK4/MAPK4, HSP27/HSPB1, p53/TP53 and RHEB. Acts as a tumor suppressor by mediating Ras-induced senescence and phosphorylating p53/TP53. Involved in post-transcriptional regulation of MYC by mediating phosphorylation of FOXO3: phosphorylation of FOXO3 leads to promote nuclear localization of FOXO3, enabling expression of miR-34b and miR-34c, 2 post-transcriptional regulators of MYC that bind to the 3'UTR of MYC transcript and prevent MYC translation. Acts as a negative regulator of mTORC1 signaling by mediating phosphorylation and inhibition of RHEB. Part of the atypical MAPK signaling via its interaction with ERK3/MAPK6 or ERK4/MAPK4: the precise role of the complex formed with ERK3/MAPK6 or ERK4/MAPK4 is still unclear, but the complex follows a complex set of phosphorylation events: upon interaction with atypical MAPK (ERK3/MAPK6 or ERK4/MAPK4), ERK3/MAPK6 (or ERK4/MAPK4) is phosphorylated and then mediates phosphorylation and activation of MAPKAPK5, which in turn phosphorylates ERK3/MAPK6 (or ERK4/MAPK4). Mediates phosphorylation of HSP27/HSPB1 in response to PKA/PRKACA stimulation, inducing F-actin rearrangement. The chain is MAP kinase-activated protein kinase 5 (Mapkapk5) from Mus musculus (Mouse).